We begin with the raw amino-acid sequence, 1212 residues long: Peregrin (1212 aa).

A C2H2-type zinc finger spans residues 21–47 (YECPVETCRKVYKSYSGIEYHLYHYDH). Disordered regions lie at residues 43–87 (YHYD…SPGR) and 118–176 (VVSE…PKLP). Basic residues predominate over residues 58–67 (LRKHKKKGRQ). Positions 59 to 221 (RKHKKKGRQS…VEYDMDEEDY (163 aa)) are interaction with KAT6A and KAT6B. The segment covering 74-85 (QSPSPSEVSQSP) has biased composition (low complexity). Residues 119-130 (VSEDEEAPEEAP) are compositionally biased toward acidic residues. Ser-120 bears the Phosphoserine mark. Position 147 is an N6-acetyllysine (Lys-147). Residues 148–166 (SGKHKNKEKRKDSNHHHHS) show a composition bias toward basic residues. Phosphoserine is present on Ser-237. The segment at 272 to 322 (DAVCCICNDGECQNSNVILFCDMCNLAVHQECYGVPYIPEGQWLCRRCLQS) adopts a PHD-type 1 zinc-finger fold. The C2HC pre-PHD-type zinc-finger motif lies at 326-359 (AVDCALCPNKGGAFKQTDDGRWAHVVCALWIPEV). The PHD-type 2 zinc finger occupies 383–447 (LTCYICKQRG…RKTAYCDIHT (65 aa)). The interval 447–489 (TPPGSARRLPALSHSEGEEEEDEEEDEGKSWSSEKVKKAKAKS) is disordered. A phosphoserine mark is found at Ser-459 and Ser-461. Acidic residues predominate over residues 463–473 (GEEEEDEEEDE). The tract at residues 500–819 (LAEKRAAAPV…IKKEMTALRR (320 aa)) is interaction with MEAF6 and ING5. Residues 542–1077 (YWTLKRQSRN…RGAGWLSEDE (536 aa)) are required for RUNX1 and RUNX2 transcriptional activation. Lys-579 bears the N6-acetyllysine mark. In terms of domain architecture, Bromo spans 627–731 (MQLTPFLILL…EQGGAVLRQA (105 aa)). Residues 817 to 1060 (LRRKLAHQRE…VGTGRGVGHS (244 aa)) are disordered. Residues 823–836 (HQRETGRDGPERHG) are compositionally biased toward basic and acidic residues. A Phosphothreonine modification is found at Thr-856. Positions 856 to 869 (TDSAAEESSSQETS) are enriched in low complexity. Phosphoserine is present on residues Ser-858, Ser-915, Ser-920, and Ser-924. Low complexity predominate over residues 993–1019 (PRSSSDSESSSSSSSSAASDRTSTTPS). A Phosphoserine modification is found at Ser-1074. The region spanning 1083-1166 (ALDLVWAKCR…RTKLVPLGVN (84 aa)) is the PWWP domain. Ser-1185 is modified (phosphoserine).

As to quaternary structure, component of some HBO1 complex composed of KAT7/HBO1, MEAF6, ING5, and BRPF1. Component of the MOZ/MORF complex composed at least of ING5, KAT6A, KAT6B, MEAF6 and one of BRPF1, BRD1/BRPF2 and BRPF3. Interacts (via PHD-type zinc finger domains) with unmethylated histone H3 at 'Lys-4' (H3K4me0). Interacts with trimethylated 'Lys-36' of histone H3 (H3K36me3). Interacts with ING5; interaction directs BRPF1 to H4K4me3-enriched chromatin at the 5' of active genes. Interacts with KAT7. Acetylated by KAT6A. In terms of tissue distribution, expressed at low level in most tissues, with high expression in the testis and specific regions of the brain.

The protein localises to the nucleus. It is found in the chromosome. The protein resides in the cytoplasm. In terms of biological role, scaffold subunit of various histone acetyltransferase (HAT) complexes, such as the MOZ/MORF and HBO1 complexes, which have a histone H3 acetyltransferase activity. Plays a key role in HBO1 complex by directing KAT7/HBO1 specificity towards histone H3 'Lys-14' acetylation (H3K14ac). Some HAT complexes preferentially mediate histone H3 'Lys-23' (H3K23ac) acetylation. Positively regulates the transcription of RUNX1 and RUNX2. This is Peregrin from Mus musculus (Mouse).